The chain runs to 1125 residues: Speract receptor (1125 aa).

The first 21 residues, 1–21 (MAHARHLFLFMVAFTITMVIA), serve as a signal peptide directing secretion. The Extracellular portion of the chain corresponds to 22–510 (RLDFNPTIIN…GELCTNWALY (489 aa)). N-linked (GlcNAc...) asparagine glycosylation is found at Asn-185 and Asn-409. Residues 511 to 531 (LGASIPTFLIIFGGLIGFFIY) form a helical membrane-spanning segment. Residues 532 to 1125 (RKRAYEAALD…AANRVIPDDV (594 aa)) lie on the Cytoplasmic side of the membrane. Residues 571-839 (MSAISVISNA…PNIMAVRTML (269 aa)) enclose the Protein kinase domain. The Guanylate cyclase domain occupies 914-1044 (SIFFSDIVGF…DTVNTASRME (131 aa)).

It belongs to the adenylyl cyclase class-4/guanylyl cyclase family.

The protein localises to the membrane. The catalysed reaction is GTP = 3',5'-cyclic GMP + diphosphate. Implicated as a cell-surface receptor on spermatozoa for 'speract' a chemotactic peptide, and on various other cells as a receptor for atrial natriuretic peptide. This chain is Speract receptor, found in Strongylocentrotus purpuratus (Purple sea urchin).